A 312-amino-acid polypeptide reads, in one-letter code: MDTGNWSQVAEFIILGFPHLQGVQIYLFLLLLLIYLMTVLGNLLIFLVVCLDSRLHTPMYHFVSILSFSELGYTAATIPKMLANLLSEKKTISFSGCLLQIYFFHSLGATECYLLTAMAYDRYLAICRPLHYPTLMTPTLCAEIAIGCWLGGLAGPVVEISLISRLPFCGPNRIQHVFCDFPPVLSLACTDTSINVLVDFVINSCKILATFLLILCSYVQIICTVLRIPSAAGKRKAISTCASHFTVVLIFYGSILSMYVQLKKSYSLDYDQALAVVYSVLTPFLNPFIYSLRNKEIKEAVRRQLKRIGILA.

The Extracellular portion of the chain corresponds to 1-25 (MDTGNWSQVAEFIILGFPHLQGVQI). Asn5 carries N-linked (GlcNAc...) asparagine glycosylation. A helical membrane pass occupies residues 26-46 (YLFLLLLLIYLMTVLGNLLIF). Residues 47-54 (LVVCLDSR) are Cytoplasmic-facing. A helical membrane pass occupies residues 55-75 (LHTPMYHFVSILSFSELGYTA). The Extracellular portion of the chain corresponds to 76 to 99 (ATIPKMLANLLSEKKTISFSGCLL). Cys97 and Cys189 form a disulfide bridge. Residues 100 to 120 (QIYFFHSLGATECYLLTAMAY) traverse the membrane as a helical segment. Residues 121–139 (DRYLAICRPLHYPTLMTPT) are Cytoplasmic-facing. A helical membrane pass occupies residues 140 to 160 (LCAEIAIGCWLGGLAGPVVEI). At 161 to 197 (SLISRLPFCGPNRIQHVFCDFPPVLSLACTDTSINVL) the chain is on the extracellular side. A helical transmembrane segment spans residues 198-217 (VDFVINSCKILATFLLILCS). Over 218 to 237 (YVQIICTVLRIPSAAGKRKA) the chain is Cytoplasmic. A helical membrane pass occupies residues 238-258 (ISTCASHFTVVLIFYGSILSM). The Extracellular segment spans residues 259–271 (YVQLKKSYSLDYD). Residues 272–292 (QALAVVYSVLTPFLNPFIYSL) traverse the membrane as a helical segment. Residues 293–312 (RNKEIKEAVRRQLKRIGILA) are Cytoplasmic-facing.

The protein belongs to the G-protein coupled receptor 1 family.

It localises to the cell membrane. Odorant receptor. The chain is Olfactory receptor 6N1 (OR6N1) from Homo sapiens (Human).